Reading from the N-terminus, the 380-residue chain is Alpha-N-acetylneuraminate alpha-2,8-sialyltransferase ST8SIA3 (380 aa).

The Cytoplasmic segment spans residues 1 to 9 (MRNCKMARV). Residues 10–33 (ASVLGLVMLSVALLNLSLISYVSL) traverse the membrane as a helical; Signal-anchor for type II membrane protein segment. Topologically, residues 34 to 380 (KKENIFATPK…LTKLTLSHCA (347 aa)) are lumenal. 2 N-linked (GlcNAc...) asparagine glycosylation sites follow: N93 and N113. 2 disulfide bridges follow: C162–C313 and C176–C379. Positions 167 and 190 each coordinate CMP-N-acetyl-beta-neuraminate. An N-linked (GlcNAc...) asparagine glycan is attached at N206. CMP-N-acetyl-beta-neuraminate is bound by residues S300, T301, G302, W322, Y336, and H337. H354 acts as the Proton donor/acceptor in catalysis.

The protein belongs to the glycosyltransferase 29 family. Homodimer. In terms of processing, autopolysialylated.

It is found in the golgi apparatus membrane. The catalysed reaction is [N-acetyl-alpha-D-neuraminosyl-(2-&gt;8)](n) + CMP-N-acetyl-beta-neuraminate = [N-acetyl-alpha-D-neuraminosyl-(2-&gt;8)](n+1) + CMP + H(+). It catalyses the reaction alpha-Neu5Ac-(2-&gt;3)-beta-D-Gal-(1-&gt;4)-6S-D-GlcNAc + CMP-N-acetyl-beta-neuraminate = alpha-Neu5Ac-(2-&gt;8)-alpha-Neu5Ac-(2-&gt;3)-beta-D-Gal-(1-&gt;4)-6S-D-GlcNAc + CMP + H(+). It carries out the reaction a ganglioside GM3 (d18:1(4E)) + CMP-N-acetyl-beta-neuraminate = a ganglioside GD3 (d18:1(4E)) + CMP + H(+). The enzyme catalyses a ganglioside GM3 + CMP-N-acetyl-beta-neuraminate = a ganglioside GD3 + CMP + H(+). The catalysed reaction is an N-acetyl-alpha-neuraminyl-(2-&gt;3)-beta-D-galactosyl derivative + CMP-N-acetyl-beta-neuraminate = an N-acetyl-alpha-neuraminyl-(2-&gt;8)-N-acetyl-alpha-neuraminyl-(2-&gt;3)-beta-D-galactosyl derivative + CMP + H(+). It catalyses the reaction an N-acetyl-alpha-neuraminyl-(2-&gt;3)-beta-D-galactosyl-(1-&gt;4)-N-acetyl-beta-D-glucosaminyl derivative + CMP-N-acetyl-beta-neuraminate = an alpha-Neu5Ac-(2-&gt;8)-alpha-Neu5Ac-(2-&gt;3)-beta-D-Gal-(1-&gt;4)-beta-D-GlcNAc derivative + CMP + H(+). It functions in the pathway protein modification; protein glycosylation. In terms of biological role, catalyzes the transfer of sialic acid from a CMP-linked sialic acid donor onto a terminal alpha-2,3-, alpha-2,6-, or alpha-2,8-linked sialic acid of an acceptor, such as N-linked oligosaccharides of glycoproteins and glycolipids through alpha-2,8-linkages. Forms oligosialic and polysialic acid on various sialylated N-acetyllactosamine oligosaccharides of glycoproteins, including FETUB N-glycans, a2-HS-glycoprotein (AHSG) and alpha 2,3-sialylated glycosphingolipids, such as alpha 2,3-sialylparagloboside and ganglioside GM3 and to a lesser extent NCAM1 N-glycans. However, it is much more specific to N-linked oligosaccharides of glycoproteins than glycosphingolipids. 2,3-sialylparagloboside serves as the best acceptor substrate among the glycolipids. alpha-Neu5Ac-(2-&gt;8)-alpha-Neu5Ac-(2-&gt;3)-beta-D-Gal-(1-&gt;4)-6S-D-GlcNAc and monosialyl and disialyl N-acetyllactosamines are the best acceptor substrates among glycoproteins. May plays critical role in the striatum by mediating the formation of disialylated and trisialylated terminal glycotopes on N- and O-glycans of specific striatal proteins, regulating their distribution in lipid rafts, affecting their interaction with other binding partners, and subsequently modulating striatal functions. The sequence is that of Alpha-N-acetylneuraminate alpha-2,8-sialyltransferase ST8SIA3 from Pan troglodytes (Chimpanzee).